A 301-amino-acid polypeptide reads, in one-letter code: Probable alpha-L-glutamate ligase (301 aa).

The region spanning 104–287 (MQLLSRKGIG…VAGLIIDFIE (184 aa)) is the ATP-grasp domain. Residues Lys141, 178–179 (EF), Asp187, and 211–213 (RSN) each bind ATP. Residues Asp248, Glu260, and Asn262 each contribute to the Mg(2+) site. Mn(2+)-binding residues include Asp248, Glu260, and Asn262.

The protein belongs to the RimK family. Mg(2+) serves as cofactor. Mn(2+) is required as a cofactor.

The sequence is that of Probable alpha-L-glutamate ligase from Aliivibrio fischeri (strain MJ11) (Vibrio fischeri).